We begin with the raw amino-acid sequence, 67 residues long: SPbeta prophage-derived uncharacterized protein YopZ (67 aa).

Residues 1–40 (MTSEMQLQAQIDVIEKENKELRRRNEELGQTVECQNKQIV) are a coiled coil. The chain crosses the membrane as a helical span at residues 44 to 66 (WRLLFFASSWIVYGIVSAIKYLW).

The protein resides in the cell membrane. The polypeptide is SPbeta prophage-derived uncharacterized protein YopZ (yopZ) (Bacillus subtilis (strain 168)).